The following is a 352-amino-acid chain: Heat-inducible transcription repressor HrcA (352 aa).

It belongs to the HrcA family.

Its function is as follows. Negative regulator of class I heat shock genes (grpE-dnaK-dnaJ and groELS operons). Prevents heat-shock induction of these operons. In Prochlorococcus marinus (strain MIT 9313), this protein is Heat-inducible transcription repressor HrcA.